Reading from the N-terminus, the 306-residue chain is UDP-3-O-acyl-N-acetylglucosamine deacetylase (306 aa).

The Zn(2+) site is built by histidine 79, histidine 238, and aspartate 242. Histidine 265 functions as the Proton donor in the catalytic mechanism.

Belongs to the LpxC family. Zn(2+) serves as cofactor.

The enzyme catalyses a UDP-3-O-[(3R)-3-hydroxyacyl]-N-acetyl-alpha-D-glucosamine + H2O = a UDP-3-O-[(3R)-3-hydroxyacyl]-alpha-D-glucosamine + acetate. It functions in the pathway glycolipid biosynthesis; lipid IV(A) biosynthesis; lipid IV(A) from (3R)-3-hydroxytetradecanoyl-[acyl-carrier-protein] and UDP-N-acetyl-alpha-D-glucosamine: step 2/6. Catalyzes the hydrolysis of UDP-3-O-myristoyl-N-acetylglucosamine to form UDP-3-O-myristoylglucosamine and acetate, the committed step in lipid A biosynthesis. This is UDP-3-O-acyl-N-acetylglucosamine deacetylase from Shewanella violacea (strain JCM 10179 / CIP 106290 / LMG 19151 / DSS12).